A 183-amino-acid chain; its full sequence is Adenine phosphoribosyltransferase (183 aa).

Belongs to the purine/pyrimidine phosphoribosyltransferase family. Homodimer.

The protein localises to the cytoplasm. It carries out the reaction AMP + diphosphate = 5-phospho-alpha-D-ribose 1-diphosphate + adenine. Its pathway is purine metabolism; AMP biosynthesis via salvage pathway; AMP from adenine: step 1/1. Functionally, catalyzes a salvage reaction resulting in the formation of AMP, that is energically less costly than de novo synthesis. The protein is Adenine phosphoribosyltransferase of Erwinia tasmaniensis (strain DSM 17950 / CFBP 7177 / CIP 109463 / NCPPB 4357 / Et1/99).